Consider the following 104-residue polypeptide: Probable monothiol glutaredoxin 2 (104 aa).

The region spanning 7–104 (FEFIENEIKN…NGELEKMLKG (98 aa)) is the Glutaredoxin domain. A glutathione-binding site is contributed by Lys24. Cys32 provides a ligand contact to [2Fe-2S] cluster. Residues Arg61, Phe73, and 86–87 (CD) contribute to the glutathione site.

The protein belongs to the glutaredoxin family. Monothiol subfamily.

This Rickettsia felis (strain ATCC VR-1525 / URRWXCal2) (Rickettsia azadi) protein is Probable monothiol glutaredoxin 2 (grxC2).